The sequence spans 421 residues: MSARAGIVVTGTEVLTGRVQDRNGPWIADRLLELGVELAHITICGDRPADIEAQLRFLAAEGVDLIVTSGGLGPTADDLTVATVARFCGRELILDTELEQRIADILRRLMGRRTDVDFDALRAANRKQAMVPDGATVLEPVGTAPGVVVPGSPTVLVLPGPPRELQPMWRTAVQTEALRSAIAGRTEYRQDMVRMFGLPESGLAETLRDAERDLAGFDRLEITTCLRRGELEIVTRYEPDAEPVYRNLLTLLRDRHGSAIFSEDGSLVDDQVAALLAGHTIATAESCTGGMLSARLTDRAGSSAYVAGAAVCYADAAKVELLGVPADLIADHGAVSEPVAEAMADGALRRFGADVAVAITGIAGPGGGTELKPVGTVCFCVRRADGRVVTRTVRLPGDRSDVRERSTTVAMHLLRRALQDG.

Belongs to the CinA family.

In Mycobacterium sp. (strain MCS), this protein is CinA-like protein.